An 874-amino-acid polypeptide reads, in one-letter code: MYQTTAALRSAFLEFFRSNGHQVVDSSSLVPGNDPTLLFTNAGMNQFKDVFLGMDKRSYTRATTAQRCVRAGGKHNDLDNVGYTARHHTFFEMLGNFSFGDYFKEDAIRFGWTFLTEVLKLPKERLCVTVYQTDDEAFEIWNKKIGVAAENIIRIGDNKGAPYASDNFWQMGDTGPCGPCTEIFYDHGDHIWGGRPGSPEEDGDRFIEIWNIVFMQYNRQASGEMLPLPKPSVDTGMGIERIAAIMQGVHSNYEIDIFRALIAKAAEIIGVTDLSNKSLRVIADHIRSCAFLVADGVMPSNEGRGYVLRRIIRRAVRHGNKLGATEAFFYKLVPTLIEVMGDAAKGLADTQVIVEKALKAEEEQFARTLERGLGILDSALNELQGDTLDGETVFKLYDTYGFPVDLTADVCRERNIIVDEAGFEVAMAEQRSRAQAAGNFGADYNAALKIDAETAFCGYSELTGNAKVTALYLNGESVSAISAGDDAVVVLDVTPFYAESGGQVGDKGVLVAQGIEFAVSDTQKFGQASGHKGTLTAGSLSVGQVLEAKVDKKLRHRTQLNHSVTHLLHAALRQVLGTHVTQKGSLVDPERLRFDFSHFEAVKPAELKQVEELVNTQIRRNHELKVAEMAIDEAKEKGAMALFGEKYDAQVRVVTMGDFSIELCGGTHVGRTGDIGLFKITSEGGIAAGVRRIEAVTGAAAMAYVAQQQAQLEEAAALLKGDTQSVVAKLKAQLDKMKQLEKDMQQLKDKLAAAASADLAGDAVVVNGVNVLIKKLEGVEAGALRGLQDELKQKLKSAVILLGVAQEGKVNLIAGVSNDLVGKVKAGELVAMVAAQVGGKGGGRPDMAQAGGSQPENLDAALSQVLPWITERLA.

His-562, His-566, Cys-664, and His-668 together coordinate Zn(2+).

The protein belongs to the class-II aminoacyl-tRNA synthetase family. It depends on Zn(2+) as a cofactor.

It localises to the cytoplasm. It catalyses the reaction tRNA(Ala) + L-alanine + ATP = L-alanyl-tRNA(Ala) + AMP + diphosphate. In terms of biological role, catalyzes the attachment of alanine to tRNA(Ala) in a two-step reaction: alanine is first activated by ATP to form Ala-AMP and then transferred to the acceptor end of tRNA(Ala). Also edits incorrectly charged Ser-tRNA(Ala) and Gly-tRNA(Ala) via its editing domain. This is Alanine--tRNA ligase from Shewanella sp. (strain ANA-3).